Reading from the N-terminus, the 219-residue chain is MRMRKKPWARPELESCNFFIVNPKENKGKWNESFNNENPIYLELGCGKGVFVAVHGSDNENINYIAIDIKDEVLGLAKRNIEKAYNEKNKELNNIKLMAQEIGLINEILDENDKISRIYINFCNPWPKKKHKKRRLTHTRQLIQYRNFLKENGEIWFKTDDDELFEESLEYFKEGKFRIEYITYDLHTSGFEGNIQTEHERMFTEQGIKTKFLIAIKED.

S-adenosyl-L-methionine is bound by residues Glu-43, Asp-68, Glu-101, and Asn-124. 2 residues coordinate substrate: Lys-128 and Asp-160.

This sequence belongs to the class I-like SAM-binding methyltransferase superfamily. TrmB family.

It catalyses the reaction guanosine(46) in tRNA + S-adenosyl-L-methionine = N(7)-methylguanosine(46) in tRNA + S-adenosyl-L-homocysteine. It functions in the pathway tRNA modification; N(7)-methylguanine-tRNA biosynthesis. In terms of biological role, catalyzes the formation of N(7)-methylguanine at position 46 (m7G46) in tRNA. This Clostridium botulinum (strain Eklund 17B / Type B) protein is tRNA (guanine-N(7)-)-methyltransferase.